A 538-amino-acid polypeptide reads, in one-letter code: CTP synthase (538 aa).

The amidoligase domain stretch occupies residues 1-267 (MDRAKFIFVT…LTPIARRFNL (267 aa)). Ser-15 is a binding site for CTP. Residue Ser-15 participates in UTP binding. Residues 16–21 (SLGKGI) and Asp-73 contribute to the ATP site. Asp-73 and Glu-141 together coordinate Mg(2+). CTP is bound by residues 148–150 (DME), 188–193 (KTKPTQ), and Lys-224. UTP-binding positions include 188–193 (KTKPTQ) and Lys-224. In terms of domain architecture, Glutamine amidotransferase type-1 spans 292-538 (KIGFVGKYLS…DFIKSALSKS (247 aa)). Gly-351 lines the L-glutamine pocket. The active-site Nucleophile; for glutamine hydrolysis is the Cys-378. L-glutamine is bound by residues 379 to 382 (LGMQ), Glu-402, and Arg-469. Catalysis depends on residues His-513 and Glu-515.

It belongs to the CTP synthase family. As to quaternary structure, homotetramer.

It carries out the reaction UTP + L-glutamine + ATP + H2O = CTP + L-glutamate + ADP + phosphate + 2 H(+). The enzyme catalyses L-glutamine + H2O = L-glutamate + NH4(+). The catalysed reaction is UTP + NH4(+) + ATP = CTP + ADP + phosphate + 2 H(+). It functions in the pathway pyrimidine metabolism; CTP biosynthesis via de novo pathway; CTP from UDP: step 2/2. Allosterically activated by GTP, when glutamine is the substrate; GTP has no effect on the reaction when ammonia is the substrate. The allosteric effector GTP functions by stabilizing the protein conformation that binds the tetrahedral intermediate(s) formed during glutamine hydrolysis. Inhibited by the product CTP, via allosteric rather than competitive inhibition. Functionally, catalyzes the ATP-dependent amination of UTP to CTP with either L-glutamine or ammonia as the source of nitrogen. Regulates intracellular CTP levels through interactions with the four ribonucleotide triphosphates. This is CTP synthase from Helicobacter pylori (strain ATCC 700392 / 26695) (Campylobacter pylori).